A 185-amino-acid polypeptide reads, in one-letter code: Elongation factor P (185 aa).

The protein belongs to the elongation factor P family.

The protein localises to the cytoplasm. It participates in protein biosynthesis; polypeptide chain elongation. Functionally, involved in peptide bond synthesis. Stimulates efficient translation and peptide-bond synthesis on native or reconstituted 70S ribosomes in vitro. Probably functions indirectly by altering the affinity of the ribosome for aminoacyl-tRNA, thus increasing their reactivity as acceptors for peptidyl transferase. The polypeptide is Elongation factor P (Nitratidesulfovibrio vulgaris (strain DSM 19637 / Miyazaki F) (Desulfovibrio vulgaris)).